Reading from the N-terminus, the 417-residue chain is Serine hydroxymethyltransferase (417 aa).

Residues Leu121 and 125-127 contribute to the (6S)-5,6,7,8-tetrahydrofolate site; that span reads GHL. An N6-(pyridoxal phosphate)lysine modification is found at Lys229. 355 to 357 serves as a coordination point for (6S)-5,6,7,8-tetrahydrofolate; it reads SPF.

Belongs to the SHMT family. In terms of assembly, homodimer. Requires pyridoxal 5'-phosphate as cofactor.

It is found in the cytoplasm. The catalysed reaction is (6R)-5,10-methylene-5,6,7,8-tetrahydrofolate + glycine + H2O = (6S)-5,6,7,8-tetrahydrofolate + L-serine. It functions in the pathway one-carbon metabolism; tetrahydrofolate interconversion. The protein operates within amino-acid biosynthesis; glycine biosynthesis; glycine from L-serine: step 1/1. Its function is as follows. Catalyzes the reversible interconversion of serine and glycine with tetrahydrofolate (THF) serving as the one-carbon carrier. This reaction serves as the major source of one-carbon groups required for the biosynthesis of purines, thymidylate, methionine, and other important biomolecules. Also exhibits THF-independent aldolase activity toward beta-hydroxyamino acids, producing glycine and aldehydes, via a retro-aldol mechanism. The sequence is that of Serine hydroxymethyltransferase from Xylella fastidiosa (strain 9a5c).